A 256-amino-acid chain; its full sequence is uncharacterized protein (256 aa).

A compositionally biased stretch (basic and acidic residues) spans 201 to 214; that stretch reads ACKEGVDSSCKEEG. The tract at residues 201-231 is disordered; sequence ACKEGVDSSCKEEGGGCEEEGSGSEEDSDDS. Over residues 215–231 the composition is skewed to acidic residues; the sequence is GGCEEEGSGSEEDSDDS.

The protein localises to the mitochondrion. This is an uncharacterized protein from Zea mays (Maize).